The sequence spans 700 residues: Methionine synthase reductase (700 aa).

The Flavodoxin-like domain maps to 4–147; it reads FLLLYATQRG…VVEPWIDGLW (144 aa). FMN contacts are provided by residues 10 to 14 and 93 to 124; these read TQRGQ and LLGL…QHFY. The hinge stretch occupies residues 168-247; it reads TLAQASDAPL…SSLSIPAVSP (80 aa). Phosphoserine is present on residues serine 173 and serine 190. The FAD-binding FR-type domain occupies 272 to 534; that stretch reads DPIFQVPISK…PRATNSFHLP (263 aa). Lysine 292 is a binding site for NADP(+). Residues 452 to 455 and 488 to 491 contribute to the FAD site; these read RPYS and GVCT. NADP(+) contacts are provided by residues 611-612, 626-628, and aspartate 661; these read SR and YVQ. FAD is bound at residue tryptophan 699.

Forms a multiprotein complex with MMACHC, MMADHC and MTR. The cofactor is FAD. FMN is required as a cofactor.

It localises to the cytoplasm. It carries out the reaction 2 methylcob(III)alamin-[methionine synthase] + 2 S-adenosyl-L-homocysteine + NADP(+) + H(+) = 2 cob(II)alamin-[methionine synthase] + 2 S-adenosyl-L-methionine + NADPH. It catalyses the reaction 2 cob(II)alamin + A + 2 H2O + 2 H(+) = 2 aquacob(III)alamin + AH2. Its function is as follows. Key enzyme in methionine and folate homeostasis responsible for the reactivation of methionine synthase (MTR/MS) activity by catalyzing the reductive methylation of MTR-bound cob(II)alamin. Cobalamin (vitamin B12) forms a complex with MTR to serve as an intermediary in methyl transfer reactions that cycles between MTR-bound methylcob(III)alamin and MTR bound-cob(I)alamin forms, and occasional oxidative escape of the cob(I)alamin intermediate during the catalytic cycle leads to the inactive cob(II)alamin species. The processing of cobalamin in the cytosol occurs in a multiprotein complex composed of at least MMACHC, MMADHC, MTRR and MTR which may contribute to shuttle safely and efficiently cobalamin towards MTR in order to produce methionine. Also necessary for the utilization of methyl groups from the folate cycle, thereby affecting transgenerational epigenetic inheritance. Also acts as a molecular chaperone for methionine synthase by stabilizing apoMTR and incorporating methylcob(III)alamin into apoMTR to form the holoenzyme. Also serves as an aquacob(III)alamin reductase by reducing aquacob(III)alamin to cob(II)alamin; this reduction leads to stimulation of the conversion of apoMTR and aquacob(III)alamin to MTR holoenzyme. This Rattus norvegicus (Rat) protein is Methionine synthase reductase (Mtrr).